Here is a 214-residue protein sequence, read N- to C-terminus: Thiamine-phosphate synthase (214 aa).

4-amino-2-methyl-5-(diphosphooxymethyl)pyrimidine contacts are provided by residues 37–41 and asparagine 73; that span reads QYREK. Mg(2+) contacts are provided by aspartate 74 and aspartate 93. Serine 112 provides a ligand contact to 4-amino-2-methyl-5-(diphosphooxymethyl)pyrimidine. 139–141 provides a ligand contact to 2-[(2R,5Z)-2-carboxy-4-methylthiazol-5(2H)-ylidene]ethyl phosphate; that stretch reads TIS. 4-amino-2-methyl-5-(diphosphooxymethyl)pyrimidine is bound at residue lysine 142. 2-[(2R,5Z)-2-carboxy-4-methylthiazol-5(2H)-ylidene]ethyl phosphate is bound by residues glycine 171 and 191–192; that span reads IS.

The protein belongs to the thiamine-phosphate synthase family. It depends on Mg(2+) as a cofactor.

It carries out the reaction 2-[(2R,5Z)-2-carboxy-4-methylthiazol-5(2H)-ylidene]ethyl phosphate + 4-amino-2-methyl-5-(diphosphooxymethyl)pyrimidine + 2 H(+) = thiamine phosphate + CO2 + diphosphate. The catalysed reaction is 2-(2-carboxy-4-methylthiazol-5-yl)ethyl phosphate + 4-amino-2-methyl-5-(diphosphooxymethyl)pyrimidine + 2 H(+) = thiamine phosphate + CO2 + diphosphate. The enzyme catalyses 4-methyl-5-(2-phosphooxyethyl)-thiazole + 4-amino-2-methyl-5-(diphosphooxymethyl)pyrimidine + H(+) = thiamine phosphate + diphosphate. It functions in the pathway cofactor biosynthesis; thiamine diphosphate biosynthesis; thiamine phosphate from 4-amino-2-methyl-5-diphosphomethylpyrimidine and 4-methyl-5-(2-phosphoethyl)-thiazole: step 1/1. Its function is as follows. Condenses 4-methyl-5-(beta-hydroxyethyl)thiazole monophosphate (THZ-P) and 2-methyl-4-amino-5-hydroxymethyl pyrimidine pyrophosphate (HMP-PP) to form thiamine monophosphate (TMP). This chain is Thiamine-phosphate synthase, found in Listeria monocytogenes serotype 4b (strain CLIP80459).